The following is a 192-amino-acid chain: MGVRECPALLLLLSLLLPPLGLPALGAPPRLICDSRVLERYILEAREAENVTMGCAEGCSFGENVTVPDTKVNFYSWKRMEVEQQAVEVWQGLALLSEAILQGQALLANSSQPSETLRLHVDKAVSSLRSLTSLLRALGAQKEAISPPDAASAAPLRTFAVDTLCKLFRIYSNFLRGKLKLYTGEACRRGDR.

The signal sequence occupies residues 1 to 26 (MGVRECPALLLLLSLLLPPLGLPALG). Cystine bridges form between Cys33-Cys187 and Cys55-Cys59. Asn50 is a glycosylation site (N-linked (GlcNAc...) asparagine). N-linked (GlcNAc...) asparagine glycans are attached at residues Asn64 and Asn109.

The protein belongs to the EPO/TPO family.

It is found in the secreted. In terms of biological role, hormone involved in the regulation of erythrocyte proliferation and differentiation and the maintenance of a physiological level of circulating erythrocyte mass. Binds to EPOR leading to EPOR dimerization and JAK2 activation thereby activating specific downstream effectors, including STAT1 and STAT3. This Equus caballus (Horse) protein is Erythropoietin (EPO).